A 474-amino-acid polypeptide reads, in one-letter code: Stabilizer of axonemal microtubules 1 (474 aa).

Mn stretches follow at residues 30-64 (KPCL…KGPI), 65-97 (PMEG…PSEE), 98-131 (NMDL…PCSD), 132-165 (KMEC…PASV), 166-199 (RFDN…LCNI), 200-232 (PLED…PCEI), 233-266 (PFES…GLDM), 267-299 (PFCN…PPED), 300-332 (RMDL…KKCG), 333-366 (RFEG…LPTE), 367-400 (PLDC…RGNV), and 401-434 (PVES…TFEE). Residues 446–474 (VSQAGSQQSSHLSVDDSENPNQRELEVLA) are disordered. The span at 448–457 (QAGSQQSSHL) shows a compositional bias: polar residues.

The protein belongs to the FAM154 family. Associates with microtubules via the Mn regions. As to expression, widely expressed, with highest levels in testis. Expressed in mature spermatozoa (at protein level).

The protein localises to the cytoplasm. The protein resides in the cytoskeleton. Its subcellular location is the microtubule organizing center. It is found in the centrosome. It localises to the centriole. The protein localises to the cilium basal body. The protein resides in the cilium axoneme. Its subcellular location is the flagellum axoneme. Functionally, may play a role in the regulation of cilium length. Stabilizes microtubules at low temperature. The protein is Stabilizer of axonemal microtubules 1 (SAXO1) of Homo sapiens (Human).